Here is a 583-residue protein sequence, read N- to C-terminus: Isocitrate dehydrogenase kinase/phosphatase (583 aa).

ATP contacts are provided by residues 315 to 321 (APGIRGM) and Lys336. Asp371 is an active-site residue.

This sequence belongs to the AceK family.

The protein localises to the cytoplasm. It catalyses the reaction L-seryl-[isocitrate dehydrogenase] + ATP = O-phospho-L-seryl-[isocitrate dehydrogenase] + ADP + H(+). Its function is as follows. Bifunctional enzyme which can phosphorylate or dephosphorylate isocitrate dehydrogenase (IDH) on a specific serine residue. This is a regulatory mechanism which enables bacteria to bypass the Krebs cycle via the glyoxylate shunt in response to the source of carbon. When bacteria are grown on glucose, IDH is fully active and unphosphorylated, but when grown on acetate or ethanol, the activity of IDH declines drastically concomitant with its phosphorylation. This is Isocitrate dehydrogenase kinase/phosphatase from Salmonella paratyphi C (strain RKS4594).